We begin with the raw amino-acid sequence, 152 residues long: UPF0756 membrane protein PEPE_1090 (152 aa).

4 consecutive transmembrane segments (helical) span residues 4-24 (WLFL…SLII), 52-72 (WGVT…KIGF), 85-105 (WIAV…VGFL), and 115-135 (LVMG…GPII).

It belongs to the UPF0756 family.

The protein localises to the cell membrane. The sequence is that of UPF0756 membrane protein PEPE_1090 from Pediococcus pentosaceus (strain ATCC 25745 / CCUG 21536 / LMG 10740 / 183-1w).